We begin with the raw amino-acid sequence, 156 residues long: Transcriptional repressor NrdR (156 aa).

A zinc finger spans residues 3–34 (CPFCSETDTKVIDSRLVADGAQVRRRRECLTC). One can recognise an ATP-cone domain in the interval 49–139 (PRVIKQDGTR…VYRSFQDLSE (91 aa)).

The protein belongs to the NrdR family. Zn(2+) serves as cofactor.

In terms of biological role, negatively regulates transcription of bacterial ribonucleotide reductase nrd genes and operons by binding to NrdR-boxes. This Saccharophagus degradans (strain 2-40 / ATCC 43961 / DSM 17024) protein is Transcriptional repressor NrdR.